The following is a 422-amino-acid chain: UDP-N-acetylglucosamine 1-carboxyvinyltransferase (422 aa).

22–23 is a phosphoenolpyruvate binding site; sequence KN. R93 is a binding site for UDP-N-acetyl-alpha-D-glucosamine. The active-site Proton donor is the C117. C117 is modified (2-(S-cysteinyl)pyruvic acid O-phosphothioketal). UDP-N-acetyl-alpha-D-glucosamine is bound by residues 122–126, D308, and L330; that span reads RPVDL.

Belongs to the EPSP synthase family. MurA subfamily.

It localises to the cytoplasm. It catalyses the reaction phosphoenolpyruvate + UDP-N-acetyl-alpha-D-glucosamine = UDP-N-acetyl-3-O-(1-carboxyvinyl)-alpha-D-glucosamine + phosphate. It functions in the pathway cell wall biogenesis; peptidoglycan biosynthesis. Functionally, cell wall formation. Adds enolpyruvyl to UDP-N-acetylglucosamine. The polypeptide is UDP-N-acetylglucosamine 1-carboxyvinyltransferase (Helicobacter pylori (strain P12)).